The chain runs to 72 residues: Translation initiation factor IF-1 (72 aa).

One can recognise an S1-like domain in the interval 1–72; that stretch reads MSKNDVIEVE…TRGRIVYRFK (72 aa).

Belongs to the IF-1 family. As to quaternary structure, component of the 30S ribosomal translation pre-initiation complex which assembles on the 30S ribosome in the order IF-2 and IF-3, IF-1 and N-formylmethionyl-tRNA(fMet); mRNA recruitment can occur at any time during PIC assembly.

It is found in the cytoplasm. In terms of biological role, one of the essential components for the initiation of protein synthesis. Stabilizes the binding of IF-2 and IF-3 on the 30S subunit to which N-formylmethionyl-tRNA(fMet) subsequently binds. Helps modulate mRNA selection, yielding the 30S pre-initiation complex (PIC). Upon addition of the 50S ribosomal subunit IF-1, IF-2 and IF-3 are released leaving the mature 70S translation initiation complex. In Desulforamulus reducens (strain ATCC BAA-1160 / DSM 100696 / MI-1) (Desulfotomaculum reducens), this protein is Translation initiation factor IF-1.